Reading from the N-terminus, the 476-residue chain is MNGYGSPYLYMGGPVSQPPRAPLQRTPKCARCRNHGVLSWLKGHKRYCRFKDCTCEKCILIIERQRVMAAQVALRRQQANESLESLIPDSLRALPGPPPPGDAAATAATASQSSPASQASQPPAPPRPTAELAAAAALRWVAEPQPGTLPAQLAKPDLTEERVGDSSSTDNTAEAFSDKDTDQRSSPDVVKSKNCFTPESPEIVSVDEGGYAVQKNGGNPESCPDSPKYHAEQSHLLIEGPSGTVSLPFSLKANRPPLEVLKKIFPNQKPTVLELILKGCGGDLVSAVEVLLSSRSSAAGAERTAEESLVLPSSGHIFEHTLGSYPISSSKWSVGSAFRVPDTLRFSADSSNVVPNPLAVPLQHPFPQPPRYPLMLRNTLARNQSSPFLPNDVTLWNTMTLQQQYQLRSQYVSPFPSNSTSVFRSSPVLSSRTTEDPRISIPDDGCPIVTKQSIYTEDDYDERSDSSDSRILNTSS.

The segment at residues 29–76 (CARCRNHGVLSWLKGHKRYCRFKDCTCEKCILIIERQRVMAAQVALRR) is a DNA-binding region (DM). 2 disordered regions span residues 89–130 (DSLR…RPTA) and 147–195 (GTLP…SKNC). Over residues 102–121 (DAAATAATASQSSPASQASQ) the composition is skewed to low complexity. Residues 165 to 174 (DSSSTDNTAE) show a composition bias toward polar residues. Positions 176-185 (FSDKDTDQRS) are enriched in basic and acidic residues. Residues 255-290 (RPPLEVLKKIFPNQKPTVLELILKGCGGDLVSAVEV) enclose the DMA domain. Residues 418–432 (NSTSVFRSSPVLSSR) show a composition bias toward polar residues. The disordered stretch occupies residues 418 to 476 (NSTSVFRSSPVLSSRTTEDPRISIPDDGCPIVTKQSIYTEDDYDERSDSSDSRILNTSS).

The protein belongs to the DMRT family. Expressed in the ventral spinal cord, in a restrical population of neurons migrating ventrically in the developing spinal cord at 11.5 dpc.

The protein resides in the nucleus. Functionally, probable transcription factor that plays a role in configuring the spinal circuits controlling stride in vertebrates. Involved in neuronal specification within specific subdivision of spinal cord neurons and in the development of a coordinated locomotor network controlling limb movements. May regulate transcription during sexual development. This Mus musculus (Mouse) protein is Doublesex- and mab-3-related transcription factor 3 (Dmrt3).